Reading from the N-terminus, the 301-residue chain is GTPase Era (301 aa).

Residues 7 to 175 (YCGFIAIVGR…AGIVRKHLPE (169 aa)) form the Era-type G domain. The G1 stretch occupies residues 15 to 22 (GRPNVGKS). 15–22 (GRPNVGKS) lines the GTP pocket. Positions 41–45 (QTTRH) are G2. The tract at residues 62 to 65 (DTPG) is G3. GTP-binding positions include 62 to 66 (DTPGL) and 124 to 127 (NKVD). Residues 124-127 (NKVD) form a G4 region. A G5 region spans residues 154 to 156 (ISA). Residues 206 to 283 (LGAELPYSVT…HLELWVKVKS (78 aa)) form the KH type-2 domain.

Belongs to the TRAFAC class TrmE-Era-EngA-EngB-Septin-like GTPase superfamily. Era GTPase family. As to quaternary structure, monomer.

Its subcellular location is the cytoplasm. The protein localises to the cell inner membrane. Functionally, an essential GTPase that binds both GDP and GTP, with rapid nucleotide exchange. Plays a role in 16S rRNA processing and 30S ribosomal subunit biogenesis and possibly also in cell cycle regulation and energy metabolism. In Salmonella heidelberg (strain SL476), this protein is GTPase Era.